A 111-amino-acid chain; its full sequence is Cell cycle protein GpsB (111 aa).

A coiled-coil region spans residues isoleucine 38 to valine 72.

Belongs to the GpsB family. Forms polymers through the coiled coil domains. Interacts with PBP1, MreC and EzrA.

Its subcellular location is the cytoplasm. Functionally, divisome component that associates with the complex late in its assembly, after the Z-ring is formed, and is dependent on DivIC and PBP2B for its recruitment to the divisome. Together with EzrA, is a key component of the system that regulates PBP1 localization during cell cycle progression. Its main role could be the removal of PBP1 from the cell pole after pole maturation is completed. Also contributes to the recruitment of PBP1 to the division complex. Not essential for septum formation. This is Cell cycle protein GpsB from Bacillus mycoides (strain KBAB4) (Bacillus weihenstephanensis).